The chain runs to 872 residues: MKQLSSAQVRQMWLDFWATKGHSVEPSVSLVPVNDPTLLWINSGVATLKKYFDGTIIPENPRITNAQKAIRTNDIENVGKTARHHTMFEMLGNFSIGDYFRDEAITWAYELLTSPEWFDFPAEKLYMTYYPDDKDSYNRWIEVGVDPSHLIPIEDNFWEIGAGPSGPDTEIFFDRGEAFDPENIGLRLLAEDIENDRYIEIWNIVLSQFNADPAVPRSEYKELPHKNIDTGAGLERLVAVIQGAKTNFETDLFMPIIREVEKLSGKVYDQDGDNMSFKVIADHIRSLSFAIGDGALPGNEGRGYVLRRLLRRASMHGQKLGINEPFLYKLVPTVGKIMESYYPEVLEKRDFIEKIVKSEEESFARTLHSGQHFAQGIVADLKEKGQSVIAGQDVFKLYDTYGFPVELTEEIAEEAGMTVDREGFEAAMKEQQERARASAVKGGSMGMQNETLQNITVESVFNYNTSQLSSKLVAIVADNAEVGAVSEGTASLIFAETSFYAEMGGQVADYGQILDESGKIVATVTNVQKAPNGQALHTVEVLAPLALNQEYTLAIDSNRRHRVMKNHTATHLLHAALHNILGNHATQAGSLNEVEFLRFDFTHFQAVTAEELRAIEQQVNEKIWEALEVKTVETDIDTAKEMGAMALFGEKYGKEVRVVTIGDYSIELCGGTHVGNTSEIGLFKIVKEEGIGSGTRRILAVTGKEAFEAYREQEDALKAIAATLKAPQVKEVPHKVEGLQEQLRQLQKENAELKEKAAAAAAGDIFKDVKEVNGHRYIASQVSVSDAGALRTFADNWKQKDYSDLLVLVAAIGDKVNVLVASKTKDLHAGNLVKELAPIIDGRGGGKPDMAMAGGSNQAKIQELLDAVAGKL.

Zn(2+) is bound by residues His567, His571, Cys669, and His673.

This sequence belongs to the class-II aminoacyl-tRNA synthetase family. It depends on Zn(2+) as a cofactor.

The protein localises to the cytoplasm. It catalyses the reaction tRNA(Ala) + L-alanine + ATP = L-alanyl-tRNA(Ala) + AMP + diphosphate. In terms of biological role, catalyzes the attachment of alanine to tRNA(Ala) in a two-step reaction: alanine is first activated by ATP to form Ala-AMP and then transferred to the acceptor end of tRNA(Ala). Also edits incorrectly charged Ser-tRNA(Ala) and Gly-tRNA(Ala) via its editing domain. The sequence is that of Alanine--tRNA ligase from Streptococcus pneumoniae (strain CGSP14).